We begin with the raw amino-acid sequence, 277 residues long: MSRNPFDDDYRPSAASSTMPVKSYTTMGHYSGEDEADYYEREIEKTLQESLDSTERSRRHLENSEKIGTSTAQQLLEQREKLENTEKNLDEIHRTTQMTQRNLNSLKSFFGGMFKNKFTKKPQEPTETPTVPQSKSASRLSETATNLSSGGGSATFSGPSGQRTLTESSRSAIKGTRWEAMDNQIDENLDMMSANLRNLQRLGADLGKEVDSQNEMLDRIQYKAERNDGIVRDQDKQMQKILGTGASTSQTTAESLTPSMDTSTKMSLMMKATSLWK.

Positions 1–11 are enriched in basic and acidic residues; that stretch reads MSRNPFDDDYR. Disordered stretches follow at residues 1–30, 49–73, and 117–170; these read MSRN…MGHY, ESLD…STAQ, and KFTK…ESSR. Residues 14-28 show a composition bias toward polar residues; that stretch reads AASSTMPVKSYTTMG. Positions 44–106 constitute a t-SNARE coiled-coil homology 1 domain; that stretch reads EKTLQESLDS…QMTQRNLNSL (63 aa). Basic and acidic residues predominate over residues 49–65; sequence ESLDSTERSRRHLENSE. Over residues 134–170 the composition is skewed to polar residues; the sequence is SKSASRLSETATNLSSGGGSATFSGPSGQRTLTESSR. A t-SNARE coiled-coil homology 2 domain is found at 179-241; the sequence is EAMDNQIDEN…RDQDKQMQKI (63 aa).

Belongs to the SNAP-25 family.

Its subcellular location is the synapse. It is found in the synaptosome. Functionally, SNAREs, soluble N-ethylmaleimide-sensitive factor-attachment protein receptors, are essential proteins for fusion of cellular membranes. SNAREs localized on opposing membranes assemble to form a trans-SNARE complex, an extended, parallel four alpha-helical bundle that drives membrane fusion. Plays a role in the processing and secretion of the aspartic protease hrg-7 from the intestine. This Caenorhabditis elegans protein is Soluble NSF attachment protein 29.